Reading from the N-terminus, the 1236-residue chain is DNA-directed RNA polymerase subunit beta (1236 aa).

Residues 1193–1212 are disordered; the sequence is PDVLDDDSYDQNNDEDIDEI. Residues 1194–1212 are compositionally biased toward acidic residues; the sequence is DVLDDDSYDQNNDEDIDEI.

Belongs to the RNA polymerase beta chain family. As to quaternary structure, the RNAP catalytic core consists of 2 alpha, 1 beta, 1 beta' and 1 omega subunit. When a sigma factor is associated with the core the holoenzyme is formed, which can initiate transcription.

The catalysed reaction is RNA(n) + a ribonucleoside 5'-triphosphate = RNA(n+1) + diphosphate. DNA-dependent RNA polymerase catalyzes the transcription of DNA into RNA using the four ribonucleoside triphosphates as substrates. The sequence is that of DNA-directed RNA polymerase subunit beta from Clostridium beijerinckii (strain ATCC 51743 / NCIMB 8052) (Clostridium acetobutylicum).